Here is a 194-residue protein sequence, read N- to C-terminus: Fe/S biogenesis protein NfuA (194 aa).

2 residues coordinate [4Fe-4S] cluster: Cys152 and Cys155.

The protein belongs to the NfuA family. Homodimer. [4Fe-4S] cluster is required as a cofactor.

Functionally, involved in iron-sulfur cluster biogenesis. Binds a 4Fe-4S cluster, can transfer this cluster to apoproteins, and thereby intervenes in the maturation of Fe/S proteins. Could also act as a scaffold/chaperone for damaged Fe/S proteins. This is Fe/S biogenesis protein NfuA from Pseudomonas fluorescens (strain SBW25).